A 218-amino-acid chain; its full sequence is Uracil-DNA glycosylase (218 aa).

Catalysis depends on aspartate 59, which acts as the Proton acceptor.

Belongs to the uracil-DNA glycosylase (UDG) superfamily. UNG family.

It localises to the cytoplasm. The enzyme catalyses Hydrolyzes single-stranded DNA or mismatched double-stranded DNA and polynucleotides, releasing free uracil.. Excises uracil residues from the DNA which can arise as a result of misincorporation of dUMP residues by DNA polymerase or due to deamination of cytosine. The sequence is that of Uracil-DNA glycosylase from Staphylococcus aureus (strain MSSA476).